We begin with the raw amino-acid sequence, 136 residues long: 14 kDa fusion protein (136 aa).

The segment at 22–50 is disordered; the sequence is EAWTTSRSSTGSANPSASRKPARYPRIHA. Positions 24–38 are enriched in polar residues; sequence WTTSRSSTGSANPSA. The N-linked (GlcNAc...) asparagine; by host glycan is linked to Asn-86.

Belongs to the poxviruses fusion protein family. Homotrimer, covalently linked.

The protein localises to the virion membrane. In terms of biological role, this protein appears to play an important role in virus penetration at the level of cell fusion. The N-terminal proximal region is essential for fusion ability. Essential in fusing the outermost of the two Golgi-derived membranes enveloping the virus with the plasma membrane, and in its subsequent release extracellularly. The polypeptide is 14 kDa fusion protein (Vaccinia virus (strain WR 65-16) (VACV)).